A 135-amino-acid polypeptide reads, in one-letter code: Large ribosomal subunit protein uL22 (135 aa).

The protein belongs to the universal ribosomal protein uL22 family. In terms of assembly, part of the 50S ribosomal subunit.

This protein binds specifically to 23S rRNA; its binding is stimulated by other ribosomal proteins, e.g. L4, L17, and L20. It is important during the early stages of 50S assembly. It makes multiple contacts with different domains of the 23S rRNA in the assembled 50S subunit and ribosome. Its function is as follows. The globular domain of the protein is located near the polypeptide exit tunnel on the outside of the subunit, while an extended beta-hairpin is found that lines the wall of the exit tunnel in the center of the 70S ribosome. The chain is Large ribosomal subunit protein uL22 from Malacoplasma penetrans (strain HF-2) (Mycoplasma penetrans).